Consider the following 297-residue polypeptide: Thiosulfate sulfurtransferase (297 aa).

Lys14 carries the post-translational modification N6-acetyllysine; alternate. Position 14 is an N6-succinyllysine; alternate (Lys14). The 119-residue stretch at 25-143 (VGPSLRVLDA…WLKEGHPVTS (119 aa)) folds into the Rhodanese 1 domain. Ser35 carries an O-linked (GlcNAc) serine glycan. Ser38 is subject to Phosphoserine. Lys136 is modified (N6-acetyllysine; alternate). Residue Lys136 is modified to N6-succinyllysine; alternate. The segment at 144–159 (EPSRPEPAVFKATLNR) is hinge. Lys163 bears the N6-acetyllysine mark. Residues 173 to 288 (QSKRFQLVDS…WFRRAPPETR (116 aa)) enclose the Rhodanese 2 domain. Position 175 is an N6-acetyllysine; alternate (Lys175). Lys175 carries the post-translational modification N6-succinyllysine; alternate. Arg187 serves as a coordination point for substrate. Lys224 is subject to N6-acetyllysine; alternate. An N6-succinyllysine; alternate modification is found at Lys224. Residue Lys236 is modified to N6-acetyllysine. An N6-acetyllysine; alternate modification is found at Lys237. Residue Lys237 is modified to N6-succinyllysine; alternate. Cys248 functions as the Cysteine persulfide intermediate in the catalytic mechanism. Lys250 provides a ligand contact to substrate.

In terms of assembly, monomer. As to expression, expressed in numerous tissues.

It localises to the mitochondrion matrix. The enzyme catalyses thiosulfate + hydrogen cyanide = thiocyanate + sulfite + 2 H(+). In terms of biological role, together with MRPL18, acts as a mitochondrial import factor for the cytosolic 5S rRNA. Only the nascent unfolded cytoplasmic form is able to bind to the 5S rRNA. Involved in the formation of iron-sulfur complexes, cyanide detoxification or modification of sulfur-containing enzymes. Other thiol compounds, besides cyanide, can act as sulfur ion acceptors. Also has weak mercaptopyruvate sulfurtransferase (MST) activity. The protein is Thiosulfate sulfurtransferase (Tst) of Rattus norvegicus (Rat).